Consider the following 73-residue polypeptide: Acyl carrier protein homolog (73 aa).

The Carrier domain occupies 1–72 (MAIKEWIITQ…DIIVLIEQKS (72 aa)). Ser32 carries the post-translational modification O-(pantetheine 4'-phosphoryl)serine.

In terms of processing, 4'-phosphopantetheine is transferred from CoA to a specific serine of the apo-ACP-like protein.

The protein operates within lipid metabolism; fatty acid biosynthesis. In terms of biological role, carrier of the growing fatty acid chain in fatty acid biosynthesis. In Mycoplasmopsis pulmonis (strain UAB CTIP) (Mycoplasma pulmonis), this protein is Acyl carrier protein homolog.